A 396-amino-acid chain; its full sequence is HVEDPQGDAAQKTDTSHHDQEHSTFNKITPSLAEFAFSLYRQLAHQSNSTNIFFSPVSIATAFAMLSLGTKADTHSEILEGLNFNLTEIPEAQIHEGFQELLHTLNKPDSQLQLTTGNGLFLNKSVKVVDKFLEDVKKLYHSEAFSVNFEDTEEAKKQINNYVEKGTQGKIVDLVKELDRDTVFALVNYIFFKGKWERPFEVEATKEEDFHVDQATTVKVPMMRRLGMFNIYHCEKLSSWVLLMKYLGNATAIFFLPDEGKLQHLENELTHDIITKFLENENRRSANLHLPKLAITGTYDLKTVLGHLGITKVFSNGADLSGVTEDAPLKLSKAVHKAVLTIDEKGTEAAGAMFLEAIPMSIPPEVKFNKPFVFLMIEQNTKSPLFMGKVVNPTQK.

Residues 1 to 2 form the signal peptide; that stretch reads HV. The tract at residues 1 to 24 is disordered; sequence HVEDPQGDAAQKTDTSHHDQEHST. Residues 14–24 show a composition bias toward basic and acidic residues; sequence DTSHHDQEHST. The residue at position 16 (S16) is a Phosphoserine. N-linked (GlcNAc...) asparagine glycans are attached at residues N48, N85, N123, and N249. The RCL stretch occupies residues 351-370; sequence GAMFLEAIPMSIPPEVKFNK. S361 carries the post-translational modification Phosphoserine.

It belongs to the serpin family. Interacts with CELA2A. Interacts with ERGIC3 and LMAN1/ERGIC53. Interacts with PRSS1/Trypsin. Plasma.

Its subcellular location is the secreted. Functionally, inhibitor of serine proteases. Its primary target is elastase, but it also has a moderate affinity for plasmin and thrombin. Inhibits trypsin, chymotrypsin and plasminogen activator. This Chlorocebus aethiops (Green monkey) protein is Alpha-1-antitrypsin (SERPINA1).